Reading from the N-terminus, the 166-residue chain is Large ribosomal subunit protein uL10 (166 aa).

This sequence belongs to the universal ribosomal protein uL10 family. As to quaternary structure, part of the ribosomal stalk of the 50S ribosomal subunit. The N-terminus interacts with L11 and the large rRNA to form the base of the stalk. The C-terminus forms an elongated spine to which L12 dimers bind in a sequential fashion forming a multimeric L10(L12)X complex.

In terms of biological role, forms part of the ribosomal stalk, playing a central role in the interaction of the ribosome with GTP-bound translation factors. The chain is Large ribosomal subunit protein uL10 (rplJ) from Neisseria meningitidis serogroup A / serotype 4A (strain DSM 15465 / Z2491).